The following is a 571-amino-acid chain: 2-succinyl-5-enolpyruvyl-6-hydroxy-3-cyclohexene-1-carboxylate synthase (571 aa).

It belongs to the TPP enzyme family. MenD subfamily. Homodimer. It depends on Mg(2+) as a cofactor. The cofactor is Mn(2+). Thiamine diphosphate serves as cofactor.

It carries out the reaction isochorismate + 2-oxoglutarate + H(+) = 5-enolpyruvoyl-6-hydroxy-2-succinyl-cyclohex-3-ene-1-carboxylate + CO2. It functions in the pathway quinol/quinone metabolism; 1,4-dihydroxy-2-naphthoate biosynthesis; 1,4-dihydroxy-2-naphthoate from chorismate: step 2/7. Its pathway is quinol/quinone metabolism; menaquinone biosynthesis. In terms of biological role, catalyzes the thiamine diphosphate-dependent decarboxylation of 2-oxoglutarate and the subsequent addition of the resulting succinic semialdehyde-thiamine pyrophosphate anion to isochorismate to yield 2-succinyl-5-enolpyruvyl-6-hydroxy-3-cyclohexene-1-carboxylate (SEPHCHC). This is 2-succinyl-5-enolpyruvyl-6-hydroxy-3-cyclohexene-1-carboxylate synthase from Lysinibacillus sphaericus (strain C3-41).